A 261-amino-acid polypeptide reads, in one-letter code: tRNA pseudouridine synthase A (261 aa).

Aspartate 51 functions as the Nucleophile in the catalytic mechanism. Substrate is bound at residue tyrosine 109.

Belongs to the tRNA pseudouridine synthase TruA family. Homodimer.

It carries out the reaction uridine(38/39/40) in tRNA = pseudouridine(38/39/40) in tRNA. In terms of biological role, formation of pseudouridine at positions 38, 39 and 40 in the anticodon stem and loop of transfer RNAs. In Shewanella sp. (strain MR-7), this protein is tRNA pseudouridine synthase A.